A 214-amino-acid chain; its full sequence is Thymidylate kinase (214 aa).

7–14 (GIEGAGKT) lines the ATP pocket.

This sequence belongs to the thymidylate kinase family.

The catalysed reaction is dTMP + ATP = dTDP + ADP. Functionally, phosphorylation of dTMP to form dTDP in both de novo and salvage pathways of dTTP synthesis. In Desulfosudis oleivorans (strain DSM 6200 / JCM 39069 / Hxd3) (Desulfococcus oleovorans), this protein is Thymidylate kinase.